The sequence spans 217 residues: Octanoyltransferase (217 aa).

The 176-residue stretch at N32–H207 folds into the BPL/LPL catalytic domain. Substrate-binding positions include R71–H78, S138–G140, and G151–A153. The active-site Acyl-thioester intermediate is the C169.

This sequence belongs to the LipB family.

It is found in the cytoplasm. It catalyses the reaction octanoyl-[ACP] + L-lysyl-[protein] = N(6)-octanoyl-L-lysyl-[protein] + holo-[ACP] + H(+). It functions in the pathway protein modification; protein lipoylation via endogenous pathway; protein N(6)-(lipoyl)lysine from octanoyl-[acyl-carrier-protein]: step 1/2. Its function is as follows. Catalyzes the transfer of endogenously produced octanoic acid from octanoyl-acyl-carrier-protein onto the lipoyl domains of lipoate-dependent enzymes. Lipoyl-ACP can also act as a substrate although octanoyl-ACP is likely to be the physiological substrate. The polypeptide is Octanoyltransferase (Shewanella oneidensis (strain ATCC 700550 / JCM 31522 / CIP 106686 / LMG 19005 / NCIMB 14063 / MR-1)).